The chain runs to 482 residues: Early growth response protein 4 (482 aa).

The disordered stretch occupies residues 274 to 357 (DLGEGAESLP…PPAKARRKGR (84 aa)). Low complexity predominate over residues 280 to 290 (ESLPGLLTPPS). Over residues 291–302 (GEGGSSGEGGEF) the composition is skewed to gly residues. Pro residues predominate over residues 337-349 (PEPPVPPPAPFPP). 3 consecutive C2H2-type zinc fingers follow at residues 376 to 400 (FACP…LRIH), 406 to 428 (FQCR…VRTH), and 434 to 456 (FACD…SKVH).

It belongs to the EGR C2H2-type zinc-finger protein family. Expressed in brain. In the cerebellum and frontal cortex.

It localises to the nucleus. Transcriptional regulator. Recognizes and binds to the DNA sequence 5'-GCGGGGGCG-3' (GSG). Activates the transcription of target genes whose products are required for mitogenesis and differentiation. The sequence is that of Early growth response protein 4 (EGR4) from Bos taurus (Bovine).